A 302-amino-acid polypeptide reads, in one-letter code: Oxygen-dependent coproporphyrinogen-III oxidase (302 aa).

Substrate is bound at residue serine 94. A divalent metal cation contacts are provided by histidine 98 and histidine 108. The Proton donor role is filled by histidine 108. Residue 110 to 112 (NVR) participates in substrate binding. Positions 147 and 177 each coordinate a divalent metal cation. The important for dimerization stretch occupies residues 242–277 (YVEFNLVYDRGTLFGLQTGGRTESILMSMPPLVRWQ). 260–262 (GGR) contributes to the substrate binding site.

The protein belongs to the aerobic coproporphyrinogen-III oxidase family. In terms of assembly, homodimer. The cofactor is a divalent metal cation.

The protein localises to the cytoplasm. It catalyses the reaction coproporphyrinogen III + O2 + 2 H(+) = protoporphyrinogen IX + 2 CO2 + 2 H2O. The protein operates within porphyrin-containing compound metabolism; protoporphyrin-IX biosynthesis; protoporphyrinogen-IX from coproporphyrinogen-III (O2 route): step 1/1. In terms of biological role, involved in the heme biosynthesis. Catalyzes the aerobic oxidative decarboxylation of propionate groups of rings A and B of coproporphyrinogen-III to yield the vinyl groups in protoporphyrinogen-IX. This is Oxygen-dependent coproporphyrinogen-III oxidase from Shewanella putrefaciens (strain CN-32 / ATCC BAA-453).